The sequence spans 385 residues: DNA replication and repair protein RecF (385 aa).

30–37 (GPNGYGKT) serves as a coordination point for ATP.

Belongs to the RecF family.

The protein localises to the cytoplasm. Its function is as follows. The RecF protein is involved in DNA metabolism; it is required for DNA replication and normal SOS inducibility. RecF binds preferentially to single-stranded, linear DNA. It also seems to bind ATP. This Mycobacterium bovis (strain ATCC BAA-935 / AF2122/97) protein is DNA replication and repair protein RecF.